A 503-amino-acid chain; its full sequence is Lysine--tRNA ligase (503 aa).

Glu414 and Glu421 together coordinate Mg(2+).

It belongs to the class-II aminoacyl-tRNA synthetase family. In terms of assembly, homodimer. Mg(2+) serves as cofactor.

Its subcellular location is the cytoplasm. It catalyses the reaction tRNA(Lys) + L-lysine + ATP = L-lysyl-tRNA(Lys) + AMP + diphosphate. This chain is Lysine--tRNA ligase, found in Neisseria gonorrhoeae (strain NCCP11945).